Reading from the N-terminus, the 219-residue chain is Ribose-5-phosphate isomerase A (219 aa).

Substrate-binding positions include 28–31 (SGST), 81–84 (DGAD), and 94–97 (KGGG). Catalysis depends on Glu103, which acts as the Proton acceptor. Substrate is bound at residue Lys121.

The protein belongs to the ribose 5-phosphate isomerase family. In terms of assembly, homodimer.

The catalysed reaction is aldehydo-D-ribose 5-phosphate = D-ribulose 5-phosphate. It participates in carbohydrate degradation; pentose phosphate pathway; D-ribose 5-phosphate from D-ribulose 5-phosphate (non-oxidative stage): step 1/1. In terms of biological role, catalyzes the reversible conversion of ribose-5-phosphate to ribulose 5-phosphate. The protein is Ribose-5-phosphate isomerase A of Haemophilus ducreyi (strain 35000HP / ATCC 700724).